The chain runs to 276 residues: uncharacterized protein (276 aa).

The interval 1 to 70 is disordered; the sequence is MSKAKSPIKS…SDDDEEDSPN (70 aa). Residues 21–35 show a composition bias toward basic and acidic residues; the sequence is VLREKKVKDAEKAEH. An RRM domain is found at 105 to 183; sequence GVLYVGRLPH…KLLQCKVIPE (79 aa). The tract at residues 249 to 276 is disordered; sequence VSHPKAASPVASKKSSKKKNKKVLAAHK. Low complexity predominate over residues 252 to 261; it reads PKAASPVASK. Basic residues predominate over residues 262-276; sequence KSSKKKNKKVLAAHK.

It is found in the nucleus. The protein resides in the nucleolus. This is an uncharacterized protein from Schizosaccharomyces pombe (strain 972 / ATCC 24843) (Fission yeast).